The primary structure comprises 704 residues: Meprin A subunit beta (704 aa).

The N-terminal stretch at 1–20 (MDARHWPWFLVFATFLLVSG) is a signal peptide. A propeptide spanning residues 21–64 (LPAPEKFVKDIDGGIDQDIFDINEDLGLDLFEGDIKLEASGRNS) is cleaved from the precursor. The Extracellular segment spans residues 21 to 654 (LPAPEKFVKD…RCEKRGSTKD (634 aa)). One can recognise a Peptidase M12A domain in the interval 63-257 (NSIIGDNYRW…LKLNQLYSCT (195 aa)). 3 disulfides stabilise this stretch: Cys104–Cys256, Cys125–Cys145, and Cys266–Cys428. His153 contributes to the Zn(2+) binding site. Residue Glu154 is part of the active site. The Zn(2+) site is built by His157 and His163. Residues Asn193, Asn219, Asn316, Asn422, Asn437, Asn528, Asn547, and Asn592 are each glycosylated (N-linked (GlcNAc...) asparagine). One can recognise an MAM domain in the interval 261 to 430 (SFMDSCDFEL…INLSETRCPH (170 aa)). In terms of domain architecture, MATH spans 431–585 (HIWHIQNFTQ…GDDVYILLTV (155 aa)). An EGF-like domain is found at 607 to 647 (VHNACSEVECQNGGICTLQEGRAECKCPAGEDWWYMGKRCE). Cystine bridges form between Cys611–Cys622, Cys616–Cys631, and Cys633–Cys646. The chain crosses the membrane as a helical span at residues 655 to 678 (TIVIAVSSTVTVFAVMLIITLISV). At 679–704 (YCTRRKYRKKASAKTAAMNLENQHAF) the chain is on the cytoplasmic side. At Thr693 the chain carries Phosphothreonine.

As to quaternary structure, homotetramer consisting of disulfide-linked beta subunits, or heterotetramer of two alpha and two beta subunits formed by non-covalent association of two disulfide-linked heterodimers. Interacts with MBL2 through its carbohydrate moiety. This interaction may inhibit its catalytic activity. Interacts with TSPAN8. Zn(2+) serves as cofactor. In terms of processing, N-glycosylated; contains high mannose and/or complex biantennary structures. Post-translationally, proteolytically activated by trypsin in the intestinal lumen and kallikrein-related peptidases in other tissues. Phosphorylated by PKC at multiple sites of its cytoplasmic part. Phosphorylation dcreases activity at the cell surface, leading to diminished substrate cleavage. Kidney, intestinal brush borders and salivary ducts.

The protein localises to the cell membrane. Its subcellular location is the secreted. It carries out the reaction Hydrolysis of proteins, including azocasein, and peptides. Hydrolysis of 5-His-|-Leu-6, 6-Leu-|-Cys-7, 14-Ala-|-Leu-15 and 19-Cys-|-Gly-20 bonds in insulin B chain.. With respect to regulation, strongly inhibited by fetuin-A/AHSG. Its function is as follows. Membrane metallopeptidase that sheds many membrane-bound proteins. Exhibits a strong preference for acidic amino acids at the P1' position. Known substrates include: FGF19, VGFA, IL1B, IL18, procollagen I and III, E-cadherin, KLK7, gastrin, ADAM10, tenascin-C. The presence of several pro-inflammatory cytokine among substrates implicate MEP1B in inflammation. It is also involved in tissue remodeling due to its capability to degrade extracellular matrix components. This chain is Meprin A subunit beta (Mep1b), found in Rattus norvegicus (Rat).